A 128-amino-acid chain; its full sequence is Large ribosomal subunit protein uL22 (128 aa).

It belongs to the universal ribosomal protein uL22 family. In terms of assembly, part of the 50S ribosomal subunit.

This protein binds specifically to 23S rRNA; its binding is stimulated by other ribosomal proteins, e.g. L4, L17, and L20. It is important during the early stages of 50S assembly. It makes multiple contacts with different domains of the 23S rRNA in the assembled 50S subunit and ribosome. Its function is as follows. The globular domain of the protein is located near the polypeptide exit tunnel on the outside of the subunit, while an extended beta-hairpin is found that lines the wall of the exit tunnel in the center of the 70S ribosome. This Prochlorococcus marinus (strain MIT 9515) protein is Large ribosomal subunit protein uL22.